We begin with the raw amino-acid sequence, 914 residues long: PHD finger protein 14 (914 aa).

The segment at 19-276 is disordered; sequence DALDYDSSDD…EDSLLERPQT (258 aa). A compositionally biased stretch (low complexity) spans 53–68; it reads ESAAGSESDSDAAAAS. Residues 90-102 show a composition bias toward basic and acidic residues; that stretch reads EKVKESFSEETSS. Composition is skewed to acidic residues over residues 155 to 168 and 191 to 233; these read ELNE…EDDN and GEED…DSEE. The segment at 285–346 adopts a PHD-type 1 zinc-finger fold; sequence ILICCVCLGD…PWFCDACKNG (62 aa). Zn(2+) is bound by residues cysteine 288, cysteine 291, cysteine 305, cysteine 308, histidine 313, cysteine 316, cysteine 340, cysteine 343, cysteine 351, cysteine 354, histidine 371, cysteine 374, cysteine 407, cysteine 410, cysteine 424, cysteine 429, histidine 434, cysteine 437, cysteine 461, and histidine 464. Residues 348-381 form a C2HC pre-PHD-type zinc finger; the sequence is SPSCELCPSQDGIFKETDAGRWVHVVCALYVPGV. The PHD-type 2 zinc-finger motif lies at 405–465; sequence KECSLCEDTR…PFFAYCKQHA (61 aa). Residues 596 to 644 adopt a coiled-coil conformation; the sequence is MIQIQDNIVEQKNLKDKLESEQEKLHMEYDKLCESLEDLQNVNGQLRTE. Residues 692 to 746 form a PHD-type 3 zinc finger; it reads LYSCGICKKNQDQHLLLLCDTCKLHYHLGCLDPPLTRMPKKTKNSYWQCSECDQA. Positions 695, 698, 710, 713, 718, 721, 740, and 743 each coordinate Zn(2+). Residues 777 to 838 form a disordered region; that stretch reads PQEMSPEPKK…PKADDTRTEC (62 aa). Basic residues predominate over residues 792 to 802; sequence TRTRGQKRKRM. Basic and acidic residues predominate over residues 803–817; that stretch reads SICEEEKMEEPLPRE. The segment at 835 to 888 adopts a PHD-type 4 zinc-finger fold; it reads RTECTTCKGPGDNENLVRCDECRLCYHFGCLDPPLKKSPKQTGYGWICQECDTS. Zn(2+)-binding residues include cysteine 838, cysteine 841, cysteine 853, cysteine 856, histidine 861, cysteine 864, cysteine 882, and cysteine 885. Residues 887–914 are disordered; sequence TSSSKEEEAQEVEEESVNEETAEQEIPD. Acidic residues predominate over residues 894 to 914; the sequence is EAQEVEEESVNEETAEQEIPD.

In terms of assembly, interacts with histone H3.

The protein localises to the nucleus. In terms of biological role, histone-binding protein. Binds preferentially to unmodified histone H3 but can also bind to a lesser extent to histone H3 trimethylated at 'Lys-9' (H3K9me3) as well as to histone H3 monomethylated at 'Lys-27' (H3K27ac) and trimethylated at 'Lys-27' (H3K27me3). Represses PDGFRA expression, thus playing a role in regulation of mesenchymal cell proliferation. This chain is PHD finger protein 14, found in Danio rerio (Zebrafish).